Here is a 727-residue protein sequence, read N- to C-terminus: E3 ubiquitin-protein ligase LRSAM1 (727 aa).

LRR repeat units lie at residues alanine 30–threonine 51, glutamine 56–leucine 77, threonine 82–leucine 103, valine 105–leucine 126, glutamine 128–arginine 150, and serine 151–valine 172. Residues glycine 227–glutamate 248 form a disordered region. Serine 234 carries the post-translational modification Phosphoserine. Coiled-coil stretches lie at residues arginine 241 to glutamine 382 and arginine 469 to tyrosine 547. An SAM domain is found at glycine 569–valine 632. Serine 604 is modified (phosphoserine). Short sequence motifs (PTAP motif) lie at residues proline 653–proline 656 and proline 665–proline 668. The RING-type zinc finger occupies cysteine 679–arginine 714.

Interacts with TSG101. Interacts with PHF23. Interacts with FUS. In terms of processing, ubiquitination promoted by PHF23 leads to proteasomal degradation. In terms of tissue distribution, widely expressed.

It is found in the cytoplasm. It catalyses the reaction S-ubiquitinyl-[E2 ubiquitin-conjugating enzyme]-L-cysteine + [acceptor protein]-L-lysine = [E2 ubiquitin-conjugating enzyme]-L-cysteine + N(6)-ubiquitinyl-[acceptor protein]-L-lysine.. Its pathway is protein modification; protein ubiquitination. Its function is as follows. E3 ubiquitin-protein ligase that mediates monoubiquitination of TSG101 at multiple sites, leading to inactivate the ability of TSG101 to sort endocytic (EGF receptors) and exocytic (viral proteins) cargos. Bacterial recognition protein that defends the cytoplasm from invasive pathogens. Localizes to several intracellular bacterial pathogens and generates the bacteria-associated ubiquitin signal leading to autophagy-mediated intracellular bacteria degradation (xenophagy). In Mus musculus (Mouse), this protein is E3 ubiquitin-protein ligase LRSAM1.